The sequence spans 483 residues: ATP synthase subunit beta (483 aa).

162–169 (GGAGVGKT) contacts ATP.

The protein belongs to the ATPase alpha/beta chains family. As to quaternary structure, F-type ATPases have 2 components, CF(1) - the catalytic core - and CF(0) - the membrane proton channel. CF(1) has five subunits: alpha(3), beta(3), gamma(1), delta(1), epsilon(1). CF(0) has four main subunits: a(1), b(1), b'(1) and c(9-12).

It is found in the cellular thylakoid membrane. It carries out the reaction ATP + H2O + 4 H(+)(in) = ADP + phosphate + 5 H(+)(out). In terms of biological role, produces ATP from ADP in the presence of a proton gradient across the membrane. The catalytic sites are hosted primarily by the beta subunits. The sequence is that of ATP synthase subunit beta from Prochloron didemni.